The chain runs to 271 residues: ABC transporter I family member 10 (271 aa).

One can recognise an ABC transporter domain in the interval 40–267 (VECRNLCFSV…IKAKQSSYID (228 aa)). 77–84 (GPNGCGKS) contributes to the ATP binding site.

This sequence belongs to the ABC transporter superfamily. ABCI family.

The sequence is that of ABC transporter I family member 10 (ABCI10) from Arabidopsis thaliana (Mouse-ear cress).